Reading from the N-terminus, the 538-residue chain is Cytochrome P450 monooxygenase fogE (538 aa).

The chain crosses the membrane as a helical span at residues 4–24; that stretch reads ASSAILLVALIAALWRLSLIG. C437 serves as a coordination point for heme.

This sequence belongs to the cytochrome P450 family. Requires heme as cofactor.

The protein resides in the membrane. The protein operates within secondary metabolite biosynthesis. Its function is as follows. Cytochrome P450 monooxygenase; part of the gene cluster that mediates the biosynthesis of flavoglaucin and congeners (including aspergin, dihydroauroglaucin and auroglaucin), prenylated salicylaldehyde derivatives carrying a saturated or an unsaturated C-7 side chain. The PKS fogA releases the carboxylic acid (8E,10E,12E)-3,5,7-trihydroxytetradeca-8,10,12-trienoic acid as its product, as well as derivatives with one and two double bonds. FogA is indeed able to reduce the initial triketide, thus being at least partially responsible for the differently saturated heptyl side chains of flavoglaucin congeners. The oxidoreductases fogB, fogC and fogD modify the nascent polyketide in fogA-bound form and, together, fogA, fogB, fogC and fogD are necessary for the formation of the aromatic core and the cyclized PKS products are released as salicyl alcohols. In particular, fogB is responsible for oxidation of a hydroxyl group or reduction of remaining double bond(s) at the C-7 residue whereas fogD is probably involved in the reductive release of the modified PKS products. The cytochrome P450 monooxygenase fogE is then responsible for the hydroxylation at C-3 of the benzene ring. The fogE products are substrates of the prenyltransferase fogH and the prenylated benzyl alcohols are subsequently oxidized by the fogF to produce the final aryl aldehydes flavoglaucin and congeners. The short-chain dehydrogenase fogG does not seem to be involved in the biosynthesis of the prenylated salicylaldehyde derivatives. The polypeptide is Cytochrome P450 monooxygenase fogE (Aspergillus ruber (strain CBS 135680)).